A 273-amino-acid chain; its full sequence is Phosphate import ATP-binding protein PstB (273 aa).

The ABC transporter domain occupies 27-268; that stretch reads VTVRNLNFYY…PSDRRTQDYI (242 aa). 59–66 is an ATP binding site; sequence GPSGCGKS.

This sequence belongs to the ABC transporter superfamily. Phosphate importer (TC 3.A.1.7) family. As to quaternary structure, the complex is composed of two ATP-binding proteins (PstB), two transmembrane proteins (PstC and PstA) and a solute-binding protein (PstS).

The protein localises to the cell inner membrane. It catalyses the reaction phosphate(out) + ATP + H2O = ADP + 2 phosphate(in) + H(+). Part of the ABC transporter complex PstSACB involved in phosphate import. Responsible for energy coupling to the transport system. In Bradyrhizobium diazoefficiens (strain JCM 10833 / BCRC 13528 / IAM 13628 / NBRC 14792 / USDA 110), this protein is Phosphate import ATP-binding protein PstB.